The sequence spans 181 residues: Oleosin (181 aa).

Positions 1 to 28 (TTTTYDRHFTTTQPHYRQDDRSRYDQQT) are disordered. Positions 1-38 (TTTTYDRHFTTTQPHYRQDDRSRYDQQTHSQSTSRTLA) are polar. The segment covering 16–26 (YRQDDRSRYDQ) has biased composition (basic and acidic residues). The next 3 helical transmembrane spans lie at 38-58 (AIIALLPVGGILLGLAALTFI), 69-89 (PLFVIFSPIIVPAVLTIGLAV), and 90-110 (TGFLASGTFGLTGLSSLSYLF). The interval 39–110 (IIALLPVGGI…TGLSSLSYLF (72 aa)) is hydrophobic. The tract at residues 155-181 (EMGDQGQVGVHAQVGGGKEGRKSGDRT) is disordered. Residues 158–167 (DQGQVGVHAQ) are compositionally biased toward low complexity. Positions 172-181 (KEGRKSGDRT) are enriched in basic and acidic residues.

This sequence belongs to the oleosin family.

The protein resides in the lipid droplet. It localises to the membrane. Its function is as follows. May have a structural role to stabilize the lipid body during desiccation of the seed by preventing coalescence of the oil. Probably interacts with both lipid and phospholipid moieties of lipid bodies. May also provide recognition signals for specific lipase anchorage in lipolysis during seedling growth. This Helianthus annuus (Common sunflower) protein is Oleosin.